Here is a 426-residue protein sequence, read N- to C-terminus: Tubby protein homolog 1 (426 aa).

Residues Gln16–Arg28 are required for localization to cilia in AWB sensory neurons. The tract at residues Met19–Ser39 is disordered.

This sequence belongs to the TUB family. In terms of assembly, interacts with rgb-3. As to expression, expressed in ciliated sensory neurons.

It is found in the cytoplasm. It localises to the cell projection. The protein localises to the axon. Its subcellular location is the dendrite. The protein resides in the cilium. Functionally, has a role in fat regulation independent of daf-16. Implicated in ciliar sensory function which is required for normal sensory behavior such as chemotaxis. Required for extension and growth of sensory neuronal cilia during postembryonic development, potentially via mediating signaling protein transport and localization of PI(4,5)P2 to the ciliary base. Functions in life span control via the insulin/IGF-1 pathway. Thought to be involved in neuronal trafficking. The sequence is that of Tubby protein homolog 1 from Caenorhabditis elegans.